A 258-amino-acid chain; its full sequence is Venom plasminogen activator Haly-PA (258 aa).

A signal peptide spans 1–18 (MALIRVLANLLILQLSYA). A propeptide spanning residues 19–24 (QKSSEL) is cleaved from the precursor. Positions 25–249 (VVGGDECNIN…HLDWIKSIIA (225 aa)) constitute a Peptidase S1 domain. Intrachain disulfides connect C31-C163, C50-C66, C98-C256, C142-C210, C174-C189, and C200-C225. The N-linked (GlcNAc...) asparagine glycan is linked to N44. Active-site charge relay system residues include H65 and D110. S204 serves as the catalytic Charge relay system.

The protein belongs to the peptidase S1 family. Snake venom subfamily. In terms of assembly, monomer. In terms of processing, glycosylated. As to expression, expressed by the venom gland.

The protein localises to the secreted. Snake venom serine protease that activates plasminogen. Displays indirect fibrino(geno)lytic activity through conversion of plasminogen to plasmin. Shows a preferential cleavage at Arg-|-Xaa instead of Lys-|-Xaa bonds. This chain is Venom plasminogen activator Haly-PA, found in Gloydius brevicauda (Korean slamosa snake).